A 2225-amino-acid chain; its full sequence is Multifunctional protein CAD (2225 aa).

At alanine 2 the chain carries N-acetylalanine. The interval 2 to 365 is GATase (Glutamine amidotransferase); that stretch reads AALVLEDGSV…TVKEATAGNP (364 aa). L-glutamine is bound by residues serine 44, glycine 222, and glycine 224. The 187-residue stretch at 177 to 363 folds into the Glutamine amidotransferase type-1 domain; that stretch reads RILALDCGLK…LETVKEATAG (187 aa). Cysteine 252 serves as the catalytic Nucleophile; for GATase activity. 5 residues coordinate L-glutamine: leucine 253, glutamine 256, asparagine 294, glycine 296, and phenylalanine 297. Catalysis depends on for GATase activity residues histidine 336 and glutamate 338. Positions 366–394 are linker; it reads GGQTVRERLTERLCPPGIPTPGSGLPPPR. Residues 395–933 form a CPSase A region; sequence KVLILGSGGL…TTHDLTFRTP (539 aa). The interval 395–1455 is CPSase (Carbamoyl phosphate synthase); sequence KVLILGSGGL…APPLKVHVDC (1061 aa). Threonine 456 carries the phosphothreonine; by MAPK1 modification. Residues arginine 515, arginine 555, glycine 561, glycine 562, lysine 592, glutamate 599, glycine 625, isoleucine 626, histidine 627, glutamine 668, and glutamate 682 each coordinate ATP. The ATP-grasp 1 domain maps to 519–711; it reads AARMAEIGEH…LAYVAAKLAL (193 aa). Mg(2+) is bound by residues glutamine 668, glutamate 682, and asparagine 684. The Mn(2+) site is built by glutamine 668, glutamate 682, and asparagine 684. Lysine 747 bears the N6-acetyllysine mark. Positions 934 to 1455 are CPSase B; it reads HVLVLGSGVY…APPLKVHVDC (522 aa). Position 1038 is a phosphoserine (serine 1038). Residues 1052–1243 form the ATP-grasp 2 domain; it reads SRLLDTIGIS…LVALATRVIM (192 aa). ATP is bound by residues arginine 1088, lysine 1127, isoleucine 1129, glutamate 1134, glycine 1159, valine 1160, histidine 1161, serine 1162, glutamine 1202, and glutamate 1214. Glutamine 1202, glutamate 1214, and asparagine 1216 together coordinate Mg(2+). Mn(2+) contacts are provided by glutamine 1202, glutamate 1214, and asparagine 1216. An MGS-like domain is found at 1308–1462; that stretch reads FKIPKKNILL…VDCMTSQKLV (155 aa). Serine 1406 carries the phosphoserine; by PKA modification. Lysine 1411 is modified (N6-acetyllysine). The interval 1456–1788 is DHOase (dihydroorotase); it reads MTSQKLVRLP…VKGTVRRVVL (333 aa). Residues histidine 1471 and histidine 1473 each coordinate Zn(2+). Residues arginine 1475 and asparagine 1505 each coordinate (S)-dihydroorotate. Zn(2+)-binding residues include lysine 1556, histidine 1590, cysteine 1613, histidine 1614, and glutamate 1637. Lysine 1556 is modified (N6-carboxylysine). Residue arginine 1661 participates in (S)-dihydroorotate binding. Aspartate 1686 provides a ligand contact to Zn(2+). The active-site For DHOase activity is aspartate 1686. (S)-dihydroorotate contacts are provided by histidine 1690 and proline 1702. The linker stretch occupies residues 1789-1917; it reads RGEVAYIDGQ…GLLHPQTSPL (129 aa). Residues 1811 to 1899 are disordered; that stretch reads KWPQGAVPQL…YPPPPVPRQA (89 aa). Positions 1825–1834 are enriched in polar residues; the sequence is PATSEMTTTP. Serine 1859 carries the phosphoserine; by RPS6KB1 and PKA modification. Residues 1866 to 1878 show a composition bias toward basic and acidic residues; sequence EEPKEKSSRKVAE. Serine 1873 carries the post-translational modification Phosphoserine; by PKC; in vitro. Threonine 1884 bears the Phosphothreonine mark. Phosphoserine is present on residues serine 1900 and serine 1938. The ATCase (Aspartate transcarbamylase) stretch occupies residues 1918–2225; it reads LHSLVGQHIL…ALLATVLGRF (308 aa). Residues arginine 1975 and threonine 1976 each coordinate carbamoyl phosphate. Lysine 2003 contacts L-aspartate. Carbamoyl phosphate contacts are provided by arginine 2024, histidine 2052, and glutamine 2055. L-aspartate contacts are provided by arginine 2085 and arginine 2146. Methionine 2185 and proline 2186 together coordinate carbamoyl phosphate.

It in the N-terminal section; belongs to the CarA family. In the 2nd section; belongs to the CarB family. The protein in the 3rd section; belongs to the metallo-dependent hydrolases superfamily. DHOase family. CAD subfamily. This sequence in the C-terminal section; belongs to the aspartate/ornithine carbamoyltransferase superfamily. ATCase family. As to quaternary structure, homohexamer. Interacts with CIPC. It depends on Zn(2+) as a cofactor. Requires Mg(2+) as cofactor. Mn(2+) serves as cofactor. In terms of processing, activated by MAP kinase (Erk1/2) phosphorylation just prior to the S phase of the cell cycle, when the demand for pyrimidine nucleotides is greatest, and down-regulated as the cells emerge from S phase by protein kinase A (PKA) phosphorylation. Phosphorylation at Ser-1859 by RPS6KB1 downstream of MTOR promotes oligomerization and stimulates dihydroorotase activity. Phosphorylation at Ser-1406 reduces sensitivity to feedback inhibition by UTP.

It localises to the cytoplasm. Its subcellular location is the nucleus. The catalysed reaction is hydrogencarbonate + L-glutamine + 2 ATP + H2O = carbamoyl phosphate + L-glutamate + 2 ADP + phosphate + 2 H(+). It carries out the reaction L-glutamine + H2O = L-glutamate + NH4(+). The enzyme catalyses hydrogencarbonate + NH4(+) + 2 ATP = carbamoyl phosphate + 2 ADP + phosphate + 2 H(+). It catalyses the reaction carbamoyl phosphate + L-aspartate = N-carbamoyl-L-aspartate + phosphate + H(+). The catalysed reaction is (S)-dihydroorotate + H2O = N-carbamoyl-L-aspartate + H(+). The protein operates within pyrimidine metabolism; UMP biosynthesis via de novo pathway; (S)-dihydroorotate from bicarbonate: step 1/3. It participates in pyrimidine metabolism; UMP biosynthesis via de novo pathway; (S)-dihydroorotate from bicarbonate: step 2/3. Its pathway is pyrimidine metabolism; UMP biosynthesis via de novo pathway; (S)-dihydroorotate from bicarbonate: step 3/3. Its activity is regulated as follows. Allosterically regulated and controlled by phosphorylation. 5-phosphoribose 1-diphosphate (PRPP) is an activator while UMP and UTP are inhibitors of the CPSase reaction. Functionally, multifunctional protein that encodes the first 3 enzymatic activities of the de novo pyrimidine pathway: carbamoylphosphate synthetase (CPSase; EC 6.3.5.5), aspartate transcarbamylase (ATCase; EC 2.1.3.2) and dihydroorotase (DHOase; EC 3.5.2.3). The CPSase-function is accomplished in 2 steps, by a glutamine-dependent amidotransferase activity (GATase) that binds and cleaves glutamine to produce ammonia, followed by an ammonium-dependent carbamoyl phosphate synthetase, which reacts with the ammonia, hydrogencarbonate and ATP to form carbamoyl phosphate. The endogenously produced carbamoyl phosphate is sequestered and channeled to the ATCase active site. ATCase then catalyzes the formation of carbamoyl-L-aspartate from L-aspartate and carbamoyl phosphate. In the last step, DHOase catalyzes the cyclization of carbamoyl aspartate to dihydroorotate. This chain is Multifunctional protein CAD, found in Homo sapiens (Human).